We begin with the raw amino-acid sequence, 552 residues long: WAP, Kazal, immunoglobulin, Kunitz and NTR domain-containing protein 1 (552 aa).

Residues 1–25 (MPAPQPLLPLLFAFVLIHLTSETNL) form the signal peptide. Residues 29 to 82 (PGSHPGMCPNQLSPHLWVDAQSTCERECTRDQDCAASEKCCTNVCGLQSCVAAR) form the WAP domain. 17 disulfides stabilise this stretch: cysteine 36-cysteine 69, cysteine 52-cysteine 73, cysteine 56-cysteine 68, cysteine 62-cysteine 78, cysteine 120-cysteine 150, cysteine 124-cysteine 143, cysteine 132-cysteine 161, cysteine 211-cysteine 267, cysteine 303-cysteine 355, cysteine 310-cysteine 338, cysteine 330-cysteine 351, cysteine 363-cysteine 413, cysteine 372-cysteine 396, cysteine 388-cysteine 409, cysteine 421-cysteine 493, cysteine 424-cysteine 495, and cysteine 435-cysteine 544. Positions 112–163 (WDGQPVCRCRDRCEKEPSFTCASDGLTYYNRCYMDAEACLRGLHLHVVPCKH) constitute a Kazal-like domain. An Ig-like C2-type domain is found at 190-283 (PALYNSPSPQ…GLLRADFPLS (94 aa)). BPTI/Kunitz inhibitor domains follow at residues 289–355 (TTQD…QQAC) and 363–413 (CALP…EDAC). One can recognise an NTR domain in the interval 413–544 (CPVPRTPPCR…IVELLEKKAC (132 aa)). An N-linked (GlcNAc...) asparagine glycan is attached at asparagine 497.

The protein belongs to the WFIKKN family. Preferentially expressed in the developing inner ear and the dorsal neural tube.

It localises to the secreted. Functionally, protease-inhibitor that contains multiple distinct protease inhibitor domains. Probably has serine protease- and metalloprotease-inhibitor activity. The sequence is that of WAP, Kazal, immunoglobulin, Kunitz and NTR domain-containing protein 1 (Wfikkn1) from Rattus norvegicus (Rat).